The following is a 1375-amino-acid chain: DNA-directed RNA polymerase subunit beta (1375 aa).

It belongs to the RNA polymerase beta chain family. In terms of assembly, the RNAP catalytic core consists of 2 alpha, 1 beta, 1 beta' and 1 omega subunit. When a sigma factor is associated with the core the holoenzyme is formed, which can initiate transcription.

The enzyme catalyses RNA(n) + a ribonucleoside 5'-triphosphate = RNA(n+1) + diphosphate. DNA-dependent RNA polymerase catalyzes the transcription of DNA into RNA using the four ribonucleoside triphosphates as substrates. The protein is DNA-directed RNA polymerase subunit beta of Methylorubrum populi (strain ATCC BAA-705 / NCIMB 13946 / BJ001) (Methylobacterium populi).